The chain runs to 123 residues: rRNA-processing protein cgr-1 (123 aa).

Low complexity predominate over residues 1 to 13; it reads MSSTTTTTQTTSQ. Disordered regions lie at residues 1-47 and 85-123; these read MSST…GLTS and EKRA…LINS. The stretch at 49-110 forms a coiled coil; the sequence is EKRAKERQLL…EKMHKKRVER (62 aa). Basic and acidic residues predominate over residues 85 to 102; it reads EKRAKKEEKERYEKMAEK. A compositionally biased stretch (basic residues) spans 103–123; it reads MHKKRVERLKRKEKRNKLINS.

It belongs to the CGR1 family.

The protein localises to the nucleus. It localises to the nucleolus. Functionally, involved in nucleolar integrity and required for processing of the pre-rRNA for the 60S ribosome subunit. The sequence is that of rRNA-processing protein cgr-1 (cgr-1) from Neurospora crassa (strain ATCC 24698 / 74-OR23-1A / CBS 708.71 / DSM 1257 / FGSC 987).